Here is a 142-residue protein sequence, read N- to C-terminus: Large ribosomal subunit protein uL22c (142 aa).

It belongs to the universal ribosomal protein uL22 family. As to quaternary structure, part of the 50S ribosomal subunit.

The protein localises to the plastid. The protein resides in the chloroplast. This protein binds specifically to 23S rRNA. Functionally, the globular domain of the protein is located near the polypeptide exit tunnel on the outside of the subunit, while an extended beta-hairpin is found that lines the wall of the exit tunnel in the center of the 70S ribosome. The chain is Large ribosomal subunit protein uL22c (rpl22) from Picea abies (Norway spruce).